The sequence spans 192 residues: Protein CREG1 (192 aa).

Positions 1–18 (MVLLAFLCAAALAALARG) are cleaved as a signal peptide. 3 N-linked (GlcNAc...) asparagine glycosylation sites follow: Asn95, Asn133, and Asn166.

It belongs to the CREG family.

The protein localises to the secreted. May contribute to the transcriptional control of cell growth and differentiation. This Gallus gallus (Chicken) protein is Protein CREG1 (CREG1).